The primary structure comprises 172 residues: Adenine phosphoribosyltransferase (172 aa).

This sequence belongs to the purine/pyrimidine phosphoribosyltransferase family. In terms of assembly, homodimer.

The protein resides in the cytoplasm. The catalysed reaction is AMP + diphosphate = 5-phospho-alpha-D-ribose 1-diphosphate + adenine. The protein operates within purine metabolism; AMP biosynthesis via salvage pathway; AMP from adenine: step 1/1. Its function is as follows. Catalyzes a salvage reaction resulting in the formation of AMP, that is energically less costly than de novo synthesis. In Polynucleobacter necessarius subsp. necessarius (strain STIR1), this protein is Adenine phosphoribosyltransferase.